A 151-amino-acid polypeptide reads, in one-letter code: UPF0208 membrane protein Spro_3315 (151 aa).

Helical transmembrane passes span 46–64 and 70–90; these read FAVR…WQIA and GPAI…LWWL.

The protein belongs to the UPF0208 family.

The protein localises to the cell inner membrane. The chain is UPF0208 membrane protein Spro_3315 from Serratia proteamaculans (strain 568).